A 1420-amino-acid polypeptide reads, in one-letter code: ABC transporter G family member 32 (1420 aa).

In terms of domain architecture, ABC transporter 1 spans 135 to 408 (LRNIHVIGGK…FSSLGFTCPD (274 aa)). Position 168–175 (168–175 (GPPSSGKT)) interacts with ATP. Positions 486 to 699 (ELLKINFAWQ…AQNAASVNEF (214 aa)) constitute an ABC transmembrane type-2 1 domain. 7 consecutive transmembrane segments (helical) span residues 504–524 (FIYVFKFVQLLLVALITMTVF), 544–564 (LYFSMVIILFNGFTEVPMLVA), 585–605 (LPSWLLSIPTSIIESATWVAV), 623–643 (FLLYFSLHQMSLGLFRVMGSL), 648–668 (IVANTFGSFAMLVVMTLGGFI), 674–694 (IPSWWIWGYWISPLMYAQNAA), and 735–755 (IGVAALLGYTVLFNILFTLFL). An ABC transporter 2 domain is found at 818 to 1070 (LSFSNINYYV…ELIKYFESIE (253 aa)). 863 to 870 (GVSGAGKT) is a binding site for ATP. Residues 1143–1357 (SQFVACLWKQ…TLYGLLVSQY (215 aa)) enclose the ABC transmembrane type-2 2 domain. The next 7 membrane-spanning stretches (helical) occupy residues 1162–1182 (YTAVRFFYTVVISLMLGTICW), 1202–1222 (YAAVLFIGITNATAAQPVVSI), 1235–1255 (MYSALPFAFAQVFIEFPYVLA), 1277–1297 (FLWYLFFMYFSIMYFTFYGMM), 1307–1327 (VASIIAAPFYMLWNLFSGFMI), 1334–1354 (LWWRWYYWANPVAWTLYGLLV), and 1392–1412 (VSAIMVVAFCVFFSLVFAFAI).

Belongs to the ABC transporter superfamily. ABCG family. PDR (TC 3.A.1.205) subfamily. Ubiquitous in aerial organs. Higher expression levels in young, expanding tissues than in older tissues. Detected in the epidermal layer.

It is found in the cell membrane. Functionally, may be a general defense protein. Required for the formation of the cuticle layer of the cell wall. The polypeptide is ABC transporter G family member 32 (Arabidopsis thaliana (Mouse-ear cress)).